The primary structure comprises 448 residues: Adenosylhomocysteinase (448 aa).

Substrate contacts are provided by Thr61, Asp136, and Glu161. 162–164 provides a ligand contact to NAD(+); that stretch reads TTA. Substrate-binding residues include Lys191 and Asp195. NAD(+)-binding positions include Asn196, 225–230, Glu248, Asn283, 304–306, and Asn360; these read GYGDVG and IGH.

This sequence belongs to the adenosylhomocysteinase family. Requires NAD(+) as cofactor.

It localises to the cytoplasm. It catalyses the reaction S-adenosyl-L-homocysteine + H2O = L-homocysteine + adenosine. The protein operates within amino-acid biosynthesis; L-homocysteine biosynthesis; L-homocysteine from S-adenosyl-L-homocysteine: step 1/1. Its function is as follows. May play a key role in the regulation of the intracellular concentration of adenosylhomocysteine. In Rhodopirellula baltica (strain DSM 10527 / NCIMB 13988 / SH1), this protein is Adenosylhomocysteinase.